An 85-amino-acid chain; its full sequence is MAVKIRLRRMGAKKAPFYRIVVADSRSPRDGRFVEEIGYYNPVTEPTIIKFDEEKAVKWIKNGAQPTDIVKKLFDKAGLKDKLGK.

It belongs to the bacterial ribosomal protein bS16 family.

In Clostridium kluyveri (strain NBRC 12016), this protein is Small ribosomal subunit protein bS16.